The primary structure comprises 279 residues: Acetyl-coenzyme A carboxylase carboxyl transferase subunit beta (279 aa).

The CoA carboxyltransferase N-terminal domain maps to 23–279 (LWWKCEECGA…LVTLFSMLKV (257 aa)). Zn(2+) is bound by residues cysteine 27, cysteine 30, cysteine 46, and cysteine 49. A C4-type zinc finger spans residues 27–49 (CEECGAMLHKKQFEDHFFTCAEC).

Belongs to the AccD/PCCB family. In terms of assembly, acetyl-CoA carboxylase is a heterohexamer composed of biotin carboxyl carrier protein (AccB), biotin carboxylase (AccC) and two subunits each of ACCase subunit alpha (AccA) and ACCase subunit beta (AccD). It depends on Zn(2+) as a cofactor.

The protein localises to the cytoplasm. The catalysed reaction is N(6)-carboxybiotinyl-L-lysyl-[protein] + acetyl-CoA = N(6)-biotinyl-L-lysyl-[protein] + malonyl-CoA. It participates in lipid metabolism; malonyl-CoA biosynthesis; malonyl-CoA from acetyl-CoA: step 1/1. Functionally, component of the acetyl coenzyme A carboxylase (ACC) complex. Biotin carboxylase (BC) catalyzes the carboxylation of biotin on its carrier protein (BCCP) and then the CO(2) group is transferred by the transcarboxylase to acetyl-CoA to form malonyl-CoA. This chain is Acetyl-coenzyme A carboxylase carboxyl transferase subunit beta, found in Pelodictyon phaeoclathratiforme (strain DSM 5477 / BU-1).